Here is a 375-residue protein sequence, read N- to C-terminus: 2-oxoglutarate synthase subunit KorA (375 aa).

In terms of assembly, heterotetramer of the KorA, KorB, KorC and KorD subunits.

It carries out the reaction 2 oxidized [2Fe-2S]-[ferredoxin] + 2-oxoglutarate + CoA = succinyl-CoA + 2 reduced [2Fe-2S]-[ferredoxin] + CO2 + H(+). This chain is 2-oxoglutarate synthase subunit KorA (korA), found in Methanothermobacter marburgensis (strain ATCC BAA-927 / DSM 2133 / JCM 14651 / NBRC 100331 / OCM 82 / Marburg) (Methanobacterium thermoautotrophicum).